A 303-amino-acid polypeptide reads, in one-letter code: Paired immunoglobulin-like type 2 receptor alpha (303 aa).

Positions 1–19 (MGRPLLLPLLPLLLPPAFL) are cleaved as a signal peptide. At 20 to 197 (QPSGSTGSGP…DSWHISLETA (178 aa)) the chain is on the extracellular side. The Ig-like V-type domain occupies 32 to 150 (LYGVTQPKHL…SIEGTKLSIT (119 aa)). N-linked (GlcNAc...) asparagine glycosylation is present at N100. Residues 198–218 (VGVAVAVTVLGIMILGLICLL) form a helical membrane-spanning segment. At 219–303 (RWRRRKGQQR…NETLYSVLKA (85 aa)) the chain is on the cytoplasmic side. Positions 226-296 (QQRTKATTPA…RPLKSPQNET (71 aa)) are disordered. 2 short sequence motifs (ITIM motif) span residues 267-272 (IVYASL) and 296-301 (TLYSVL).

Monomer. Interacts with PTPN6/SHP-1 and PTPN11/SHP-2 upon tyrosine phosphorylation. As to quaternary structure, (Microbial infection) Interacts with herpes simplex virus 1 glycoprotein B. According to PubMed:10660620, N- and O-glycosylated. According to PubMed:10903717, only N-glycosylated. In terms of processing, phosphorylated on tyrosine residues. As to expression, predominantly detected in hemopoietic tissues and is expressed by monocytes, macrophages, and granulocytes, but not by lymphocytes. Also strongly expressed by dendritic cells (DC); preferentially by CD14+/CD1a- DC derived from CD34+ progenitors. Also expressed by CD11c+ blood and tonsil DC, but not by CD11c- DC precursors.

It is found in the cell membrane. The protein resides in the secreted. Its function is as follows. Paired receptors consist of highly related activating and inhibitory receptors and are widely involved in the regulation of the immune system. PILRA is thought to act as a cellular signaling inhibitory receptor by recruiting cytoplasmic phosphatases like PTPN6/SHP-1 and PTPN11/SHP-2 via their SH2 domains that block signal transduction through dephosphorylation of signaling molecules. Receptor for PIANP. In terms of biological role, (Microbial infection) Acts as an entry co-receptor for herpes simplex virus 1. The chain is Paired immunoglobulin-like type 2 receptor alpha (PILRA) from Homo sapiens (Human).